A 62-amino-acid polypeptide reads, in one-letter code: Large ribosomal subunit protein bL28 (62 aa).

A disordered region spans residues 1 to 28; it reads MARVCAITGRKARSGNSRSHAMNATKRK.

The protein belongs to the bacterial ribosomal protein bL28 family.

The protein is Large ribosomal subunit protein bL28 of Bacillus cytotoxicus (strain DSM 22905 / CIP 110041 / 391-98 / NVH 391-98).